The chain runs to 90 residues: DNA-directed RNA polymerase subunit omega (90 aa).

The protein belongs to the RNA polymerase subunit omega family. As to quaternary structure, the RNAP catalytic core consists of 2 alpha, 1 beta, 1 beta' and 1 omega subunit. When a sigma factor is associated with the core the holoenzyme is formed, which can initiate transcription.

It carries out the reaction RNA(n) + a ribonucleoside 5'-triphosphate = RNA(n+1) + diphosphate. Promotes RNA polymerase assembly. Latches the N- and C-terminal regions of the beta' subunit thereby facilitating its interaction with the beta and alpha subunits. Required for kasugamycin production and aerial mycelium formation in S.kasugaensis and responsible for pleiotropy. The protein is DNA-directed RNA polymerase subunit omega (rpoZ) of Streptomyces kasugaensis.